Consider the following 507-residue polypeptide: Protein DETOXIFICATION 41 (507 aa).

The Cytoplasmic segment spans residues 1–62 (MSSTETYEPL…KLLWTLSGAS (62 aa)). The helical transmembrane segment at 63–83 (IVVSVLNYMLSFVTVMFTGHL) threads the bilayer. Topologically, residues 84 to 92 (GSLQLAGAS) are vacuolar. Residues 93–113 (IATVGIQGLAYGIMLGMASAV) form a helical membrane-spanning segment. Residues 114–137 (QTVCGQAYGARQYSSMGIICQRAM) are Cytoplasmic-facing. The chain crosses the membrane as a helical span at residues 138–158 (VLHLAAAVFLTFLYWYSGPIL). Residues 159–170 (KTMGQSVAIAHE) lie on the Vacuolar side of the membrane. A helical transmembrane segment spans residues 171–191 (GQIFARGMIPQIYAFALACPM). At 192 to 202 (QRFLQAQNIVN) the chain is on the cytoplasmic side. The chain crosses the membrane as a helical span at residues 203–223 (PLAYMSLGVFLLHTLLTWLVT). Position 224 (Asn224) is a topological domain, vacuolar. A helical transmembrane segment spans residues 225 to 245 (VLDFGLLGAALILSFSWWLLV). The Cytoplasmic portion of the chain corresponds to 246-283 (AVNGMYILMSPNCKETWTGFSTRAFRGIWPYFKLTVAS). The chain crosses the membrane as a helical span at residues 284 to 304 (AVMLCLEIWYNQGLVIISGLL). Topologically, residues 305–312 (SNPTISLD) are vacuolar. A helical transmembrane segment spans residues 313–333 (AISICMYYLNWDMQFMLGLSA). The Cytoplasmic segment spans residues 334–355 (AISVRVSNELGAGNPRVAMLSV). A helical membrane pass occupies residues 356–376 (VVVNITTVLISSVLCVIVLVF). Residues 377–389 (RVGLSKAFTSDAE) are Vacuolar-facing. A helical transmembrane segment spans residues 390–410 (VIAAVSDLFPLLAVSIFLNGI). Over 411–425 (QPILSGVAIGSGWQA) the chain is Cytoplasmic. A helical membrane pass occupies residues 426–446 (VVAYVNLVTYYVIGLPIGCVL). At 447-453 (GFKTSLG) the chain is on the vacuolar side. Residues 454–474 (VAGIWWGMIAGVILQTLTLIV) form a helical membrane-spanning segment. Residues 475–507 (LTLKTNWTSEVENAAQRVKTSATENQEMANAGV) lie on the Cytoplasmic side of the membrane.

It belongs to the multi antimicrobial extrusion (MATE) (TC 2.A.66.1) family. Expressed in reproductive tissues, from buds to siliques. Restricted to the endothelium layer of the ovule and the seed coat.

It is found in the vacuole membrane. It participates in secondary metabolite biosynthesis; flavonoid biosynthesis. Acts as a flavonoid/H(+)-antiporter that control the vacuolar sequestration of flavonoids in the seed coat endothelium. Could transport the anthocyanin cyanidin-3-O-glucoside and epicatechin 3'-O-glucoside in vitro. The sequence is that of Protein DETOXIFICATION 41 from Arabidopsis thaliana (Mouse-ear cress).